A 72-amino-acid chain; its full sequence is Translation initiation factor IF-1 (72 aa).

The S1-like domain occupies 1-72 (MAKEEAITVD…SKGRITYRKK (72 aa)).

It belongs to the IF-1 family. Component of the 30S ribosomal translation pre-initiation complex which assembles on the 30S ribosome in the order IF-2 and IF-3, IF-1 and N-formylmethionyl-tRNA(fMet); mRNA recruitment can occur at any time during PIC assembly.

The protein localises to the cytoplasm. In terms of biological role, one of the essential components for the initiation of protein synthesis. Stabilizes the binding of IF-2 and IF-3 on the 30S subunit to which N-formylmethionyl-tRNA(fMet) subsequently binds. Helps modulate mRNA selection, yielding the 30S pre-initiation complex (PIC). Upon addition of the 50S ribosomal subunit IF-1, IF-2 and IF-3 are released leaving the mature 70S translation initiation complex. The polypeptide is Translation initiation factor IF-1 (Leptospira borgpetersenii serovar Hardjo-bovis (strain L550)).